A 315-amino-acid polypeptide reads, in one-letter code: Methionyl-tRNA formyltransferase (315 aa).

113–116 is a binding site for (6S)-5,6,7,8-tetrahydrofolate; the sequence is SLLP.

The protein belongs to the Fmt family.

It carries out the reaction L-methionyl-tRNA(fMet) + (6R)-10-formyltetrahydrofolate = N-formyl-L-methionyl-tRNA(fMet) + (6S)-5,6,7,8-tetrahydrofolate + H(+). Attaches a formyl group to the free amino group of methionyl-tRNA(fMet). The formyl group appears to play a dual role in the initiator identity of N-formylmethionyl-tRNA by promoting its recognition by IF2 and preventing the misappropriation of this tRNA by the elongation apparatus. This is Methionyl-tRNA formyltransferase from Shigella boydii serotype 18 (strain CDC 3083-94 / BS512).